Reading from the N-terminus, the 59-residue chain is Small ribosomal subunit protein bS21 (59 aa).

A disordered region spans residues 39-59; it reads ETPVEKYKRKQRLKNRTKRRR. Residues 45–59 are compositionally biased toward basic residues; sequence YKRKQRLKNRTKRRR.

It belongs to the bacterial ribosomal protein bS21 family.

The protein is Small ribosomal subunit protein bS21 of Prochlorococcus marinus (strain SARG / CCMP1375 / SS120).